The sequence spans 204 residues: MKNSLLSHQEKKIISFIKQYLNENGYPPTIREICQGVGLSSPSTVHHHLKNLESKGYLQRNPTKPRALELVAEKAPEELLSIPLLGNVAAGYPTLAIENAEEEMQIPKSLFPEKELFALRIKGDSMIEEGILPGDVIIVKKQEVAENGDIVVAYLEGEVTVKKFWKDSVNGVIKLIPANSKYEPIIINRETKILGKVIGLLRRY.

A DNA-binding region (H-T-H motif) is located at residues 30–50 (IREICQGVGLSSPSTVHHHLK). Catalysis depends on for autocatalytic cleavage activity residues Ser-125 and Lys-162.

It belongs to the peptidase S24 family. Homodimer.

The enzyme catalyses Hydrolysis of Ala-|-Gly bond in repressor LexA.. Functionally, represses a number of genes involved in the response to DNA damage (SOS response), including recA and lexA. In the presence of single-stranded DNA, RecA interacts with LexA causing an autocatalytic cleavage which disrupts the DNA-binding part of LexA, leading to derepression of the SOS regulon and eventually DNA repair. This chain is LexA repressor, found in Carboxydothermus hydrogenoformans (strain ATCC BAA-161 / DSM 6008 / Z-2901).